Reading from the N-terminus, the 478-residue chain is Lysosome membrane protein 2 (478 aa).

The Cytoplasmic portion of the chain corresponds to 2-4; sequence ARC. Residues 5–27 form a helical membrane-spanning segment; sequence CFYTAGTLSLLLLVTSVTLLVAR. Over 28–433 the chain is Lumenal; sequence VFQKAVDQTI…QLKSVINTTL (406 aa). 4 N-linked (GlcNAc...) asparagine glycosylation sites follow: asparagine 45, asparagine 68, asparagine 105, and asparagine 122. Residues 155–191 form an important for interaction with GBA1 region; the sequence is IIEAMLKAYQQTLFVTHTVHELLWGYKDEVLSLVHIF. 4 N-linked (GlcNAc...) asparagine glycosylation sites follow: asparagine 206, asparagine 224, asparagine 249, and asparagine 304. 2 disulfide bridges follow: cysteine 274-cysteine 329 and cysteine 312-cysteine 318. N-linked (GlcNAc...) asparagine glycosylation is found at asparagine 325, asparagine 412, and asparagine 430. Residues 434-459 form a helical membrane-spanning segment; the sequence is IVTNIPYIIMALGVFFGLIFTWLACR. Over 460–478 the chain is Cytoplasmic; the sequence is GQGSTDEGTADERAPLIRT.

The protein belongs to the CD36 family. As to quaternary structure, interacts with GBA1. Post-translationally, acylated by palmitic acid group(s).

The protein localises to the lysosome membrane. Acts as a lysosomal receptor for glucosylceramidase (GBA1) targeting. This chain is Lysosome membrane protein 2 (Scarb2), found in Rattus norvegicus (Rat).